A 361-amino-acid polypeptide reads, in one-letter code: S-adenosylmethionine:tRNA ribosyltransferase-isomerase (361 aa).

It belongs to the QueA family. As to quaternary structure, monomer.

It is found in the cytoplasm. The enzyme catalyses 7-aminomethyl-7-carbaguanosine(34) in tRNA + S-adenosyl-L-methionine = epoxyqueuosine(34) in tRNA + adenine + L-methionine + 2 H(+). Its pathway is tRNA modification; tRNA-queuosine biosynthesis. In terms of biological role, transfers and isomerizes the ribose moiety from AdoMet to the 7-aminomethyl group of 7-deazaguanine (preQ1-tRNA) to give epoxyqueuosine (oQ-tRNA). The sequence is that of S-adenosylmethionine:tRNA ribosyltransferase-isomerase from Actinobacillus pleuropneumoniae serotype 7 (strain AP76).